Here is a 123-residue protein sequence, read N- to C-terminus: MHELSIAHSLVEIAEEAAAKAGVARVTVVHLRLGTLSGVVRDALLFGFDVASAGTRLEGARLEIEEVPLQVYCETCDTVVALPDVRYFRCPQCGAACRRIVTGQEIELAALEYEDDTPEATAS.

Residue His-2 coordinates Ni(2+). Zn(2+) is bound by residues Cys-73, Cys-76, Cys-90, and Cys-93.

Belongs to the HypA/HybF family.

Its function is as follows. Involved in the maturation of [NiFe] hydrogenases. Required for nickel insertion into the metal center of the hydrogenase. This chain is Hydrogenase maturation factor HypA, found in Roseiflexus sp. (strain RS-1).